Here is a 352-residue protein sequence, read N- to C-terminus: Putative histone-lysine N-methyltransferase ASHH4 (352 aa).

One can recognise an AWS domain in the interval 60–109; the sequence is DHGIFCSCSLDPGSSTLCGSDCNCGILLSSCSSSCKCSSECTNKPFQQRH. Residues 111-228 form the SET domain; sequence KKMKLVQTEK…KGEQLTYDYQ (118 aa). The 17-residue stretch at 234 to 250 folds into the Post-SET domain; it reads ADQDCYCGAVCCRKKLG.

It belongs to the class V-like SAM-binding methyltransferase superfamily. Histone-lysine methyltransferase family. SET2 subfamily.

The protein resides in the nucleus. It localises to the chromosome. Its subcellular location is the centromere. The enzyme catalyses L-lysyl-[histone] + S-adenosyl-L-methionine = N(6)-methyl-L-lysyl-[histone] + S-adenosyl-L-homocysteine + H(+). In terms of biological role, histone methyltransferase. This chain is Putative histone-lysine N-methyltransferase ASHH4 (ASHH4), found in Arabidopsis thaliana (Mouse-ear cress).